A 353-amino-acid chain; its full sequence is N-acetyl-gamma-glutamyl-phosphate reductase (353 aa).

The active site involves Cys-157.

The protein belongs to the NAGSA dehydrogenase family. Type 1 subfamily.

The protein localises to the cytoplasm. It catalyses the reaction N-acetyl-L-glutamate 5-semialdehyde + phosphate + NADP(+) = N-acetyl-L-glutamyl 5-phosphate + NADPH + H(+). Its pathway is amino-acid biosynthesis; L-arginine biosynthesis; N(2)-acetyl-L-ornithine from L-glutamate: step 3/4. Catalyzes the NADPH-dependent reduction of N-acetyl-5-glutamyl phosphate to yield N-acetyl-L-glutamate 5-semialdehyde. The protein is N-acetyl-gamma-glutamyl-phosphate reductase of Bordetella avium (strain 197N).